The following is a 371-amino-acid chain: tRNA-specific 2-thiouridylase MnmA (371 aa).

ATP-binding positions include 13 to 20 and M39; that span reads GMSGGVDS. The tract at residues 99 to 101 is interaction with target base in tRNA; sequence NPD. The active-site Nucleophile is the C104. Residues C104 and C200 are joined by a disulfide bond. An ATP-binding site is contributed by G128. The interaction with tRNA stretch occupies residues 150–152; the sequence is KDQ. The active-site Cysteine persulfide intermediate is C200. Residues 308–309 form an interaction with tRNA region; that stretch reads RY.

The protein belongs to the MnmA/TRMU family.

It localises to the cytoplasm. The catalysed reaction is S-sulfanyl-L-cysteinyl-[protein] + uridine(34) in tRNA + AH2 + ATP = 2-thiouridine(34) in tRNA + L-cysteinyl-[protein] + A + AMP + diphosphate + H(+). In terms of biological role, catalyzes the 2-thiolation of uridine at the wobble position (U34) of tRNA, leading to the formation of s(2)U34. In Bacillus thuringiensis (strain Al Hakam), this protein is tRNA-specific 2-thiouridylase MnmA.